We begin with the raw amino-acid sequence, 185 residues long: Elongation factor P (185 aa).

It belongs to the elongation factor P family.

The protein localises to the cytoplasm. Its pathway is protein biosynthesis; polypeptide chain elongation. Its function is as follows. Involved in peptide bond synthesis. Stimulates efficient translation and peptide-bond synthesis on native or reconstituted 70S ribosomes in vitro. Probably functions indirectly by altering the affinity of the ribosome for aminoacyl-tRNA, thus increasing their reactivity as acceptors for peptidyl transferase. The polypeptide is Elongation factor P (Geobacillus kaustophilus (strain HTA426)).